The primary structure comprises 146 residues: VHLSDGEKNAISTAWGKVHAAEVGAEALGRLLVVYPWTQRFFDSFGDLSSASAVMGNAKVKAHGKKVIDSFSNGLKHLDNLKGTFASLSELHCDKLHVDPENFKLLGNMIVIVMAHHLGKDFTPEAQAAFQKVVAGVANALAHKYH.

Val1 is modified (N-acetylvaline). The 145-residue stretch at 2–146 folds into the Globin domain; that stretch reads HLSDGEKNAI…VANALAHKYH (145 aa). Position 44 is a phosphoserine (Ser44). N6-acetyllysine is present on Lys59. Residue His63 coordinates heme b. N6-acetyllysine is present on Lys82. His92 lines the heme b pocket. Cys93 carries the post-translational modification S-nitrosocysteine. The residue at position 144 (Lys144) is an N6-acetyllysine.

It belongs to the globin family. Heterotetramer of two alpha chains and two beta chains. Red blood cells.

In terms of biological role, involved in oxygen transport from the lung to the various peripheral tissues. This is Hemoglobin subunit beta (HBB) from Spermophilus citellus (European ground squirrel).